Consider the following 1061-residue polypeptide: Error-prone DNA polymerase (1061 aa).

This sequence belongs to the DNA polymerase type-C family. DnaE2 subfamily.

The protein localises to the cytoplasm. It carries out the reaction DNA(n) + a 2'-deoxyribonucleoside 5'-triphosphate = DNA(n+1) + diphosphate. DNA polymerase involved in damage-induced mutagenesis and translesion synthesis (TLS). It is not the major replicative DNA polymerase. The sequence is that of Error-prone DNA polymerase from Bdellovibrio bacteriovorus (strain ATCC 15356 / DSM 50701 / NCIMB 9529 / HD100).